Here is a 202-residue protein sequence, read N- to C-terminus: Small ribosomal subunit protein uS4c (202 aa).

Residues 90-153 (MRLDNIIFRL…KSETIISKNI (64 aa)) enclose the S4 RNA-binding domain.

This sequence belongs to the universal ribosomal protein uS4 family. Part of the 30S ribosomal subunit. Contacts protein S5. The interaction surface between S4 and S5 is involved in control of translational fidelity.

Its subcellular location is the plastid. It localises to the chloroplast. Its function is as follows. One of the primary rRNA binding proteins, it binds directly to 16S rRNA where it nucleates assembly of the body of the 30S subunit. With S5 and S12 plays an important role in translational accuracy. The chain is Small ribosomal subunit protein uS4c (rps4) from Catharomnion ciliatum (Moss).